We begin with the raw amino-acid sequence, 859 residues long: MEVATSSTEITIQTDRDPSSNNNGSCAVASSTASAVFRKIEFHPARKPFNGFSNGRSDFKIETLNPCSSNQRLLSAPSAKKPDSSDLLEHGFEPDLTFSITFRKIGAGLQNLGNTCFLNSVLQCLTYTEPLAATLQTAAHQKYCHVAGFCALCAIQKHVRTARQANGRILAPKDLVSNLRCISRNFRNCRQEDAHEYMINLLECMHKCSLPSGVPSESSDAYRRSLVHKIFGGSLRSQVKCEQCSHCSNKFDPFLDLSLDISKADSLQRALSRFTAVELLDNGAKVYQCERCKQKVKAKKQLTVSKAPYVLTVHLKRFEAHRSEKIDRKVDFTSAIDMKPFVSGPHEGNLKYTLYGVLVHYGRSSHSGHYACFVRTSSGMWYSLDDNRVVQVSEKTVFNQKAYMLFYVRDRQNAVPKNSVPVVKKESFATNRASLIVASNIKDQVNGSTVIKECGFGALVANGLAPLKSCGPSTPAVLTQKDLNAKETQNNAISNVEAKEILETENGSAPVKTCDLAAPTVLVQKDLNTKEIFQKEVPLPQANGEGSLVKEDSKAACLILPEKVSPHLDGSANAQTLVKLPTLGPKAENSVEEKNSLNNLNEPANSLKVINVSVGNPPVEKAVLIDQTMGHHLEESATSIESLKLTSERETLTTPKKTRKPKTKTLKVEFKFFKLALGLRKKKVQRRERLSTTVAGEIISEELLSKKRVKYQDTSLIAPSKMISSSDGAVTSDQQQPVGSSDLSEASQNAKRKRESVLLQKEAVNILTRGVPETVVAKWDEEISASQKRGSKSEGASSIGYVADEWDEEYDRGKKKKIRIKEESYRGPNPFQMLASKRQKETKKKWTQSITDAKTAYRI.

Residues 1–24 are compositionally biased toward polar residues; that stretch reads MEVATSSTEITIQTDRDPSSNNNG. The tract at residues 1–26 is disordered; sequence MEVATSSTEITIQTDRDPSSNNNGSC. The region spanning 107–410 is the USP domain; it reads AGLQNLGNTC…KAYMLFYVRD (304 aa). Residue C116 is the Nucleophile of the active site. The active-site Proton acceptor is H369. Disordered regions lie at residues 722 to 749 and 822 to 859; these read MISS…ASQN and EESY…AYRI.

It belongs to the peptidase C19 family.

The catalysed reaction is Thiol-dependent hydrolysis of ester, thioester, amide, peptide and isopeptide bonds formed by the C-terminal Gly of ubiquitin (a 76-residue protein attached to proteins as an intracellular targeting signal).. In terms of biological role, recognizes and hydrolyzes the peptide bond at the C-terminal Gly of ubiquitin. Involved in the processing of poly-ubiquitin precursors as well as that of ubiquitinated proteins. This chain is Ubiquitin carboxyl-terminal hydrolase 23 (UBP23), found in Arabidopsis thaliana (Mouse-ear cress).